Reading from the N-terminus, the 293-residue chain is Elongation factor Ts (293 aa).

The segment at 79–82 is involved in Mg(2+) ion dislocation from EF-Tu; sequence TDFV.

The protein belongs to the EF-Ts family.

The protein resides in the cytoplasm. Its function is as follows. Associates with the EF-Tu.GDP complex and induces the exchange of GDP to GTP. It remains bound to the aminoacyl-tRNA.EF-Tu.GTP complex up to the GTP hydrolysis stage on the ribosome. This Halalkalibacterium halodurans (strain ATCC BAA-125 / DSM 18197 / FERM 7344 / JCM 9153 / C-125) (Bacillus halodurans) protein is Elongation factor Ts (tsf).